Consider the following 351-residue polypeptide: Beta-hexosaminidase (351 aa).

Substrate is bound by residues Asp62, Arg70, Arg134, and 164 to 165 (KH). The active-site Proton donor/acceptor is His177. The active-site Nucleophile is the Asp249.

It belongs to the glycosyl hydrolase 3 family. NagZ subfamily. Monomer.

It localises to the cytoplasm. It catalyses the reaction Hydrolysis of terminal non-reducing N-acetyl-D-hexosamine residues in N-acetyl-beta-D-hexosaminides.. The protein operates within cell wall biogenesis; peptidoglycan recycling. Plays a role in peptidoglycan recycling by cleaving the terminal beta-1,4-linked N-acetylglucosamine (GlcNAc) from peptide-linked peptidoglycan fragments, giving rise to free GlcNAc, anhydro-N-acetylmuramic acid and anhydro-N-acetylmuramic acid-linked peptides. The sequence is that of Beta-hexosaminidase from Pasteurella multocida (strain Pm70).